The chain runs to 258 residues: Acyl-[acyl-carrier-protein]--UDP-N-acetylglucosamine O-acyltransferase (258 aa).

This sequence belongs to the transferase hexapeptide repeat family. LpxA subfamily. As to quaternary structure, homotrimer.

The protein resides in the cytoplasm. The catalysed reaction is a (3R)-hydroxyacyl-[ACP] + UDP-N-acetyl-alpha-D-glucosamine = a UDP-3-O-[(3R)-3-hydroxyacyl]-N-acetyl-alpha-D-glucosamine + holo-[ACP]. It participates in glycolipid biosynthesis; lipid IV(A) biosynthesis; lipid IV(A) from (3R)-3-hydroxytetradecanoyl-[acyl-carrier-protein] and UDP-N-acetyl-alpha-D-glucosamine: step 1/6. Its function is as follows. Involved in the biosynthesis of lipid A, a phosphorylated glycolipid that anchors the lipopolysaccharide to the outer membrane of the cell. This is Acyl-[acyl-carrier-protein]--UDP-N-acetylglucosamine O-acyltransferase from Pseudomonas syringae pv. tomato (strain ATCC BAA-871 / DC3000).